The sequence spans 801 residues: Ribosome biogenesis protein ERB1 (801 aa).

Disordered stretches follow at residues 1–135 (MGSK…LEDR) and 358–377 (PEYL…DPED). The span at 35–90 (SEDEEDYIPSSEVDEDDDDDADESASEDSDDSNDSEDDEVEEDDEALLSDEIPSEG) shows a compositional bias: acidic residues. 3 stretches are compositionally biased toward basic and acidic residues: residues 91-113 (ESEK…KEPS), 124-135 (PPRKEDEELEDR), and 362-377 (PTKE…DPED). WD repeat units lie at residues 451–490 (GHEG…QVWS) and 494–534 (NGDE…VTPA). A disordered region spans residues 546–570 (GFGHATNGKQQANLPPGKEPPGKWA). 5 WD repeats span residues 586–628 (TVRS…TQIP), 631–669 (KLNG…LVKI), 672–711 (PGAK…RPYK), 715–755 (FHTE…DQLE), and 771–801 (VNKL…RLWM).

The protein belongs to the WD repeat BOP1/ERB1 family. As to quaternary structure, component of the NOP7 complex, composed of ERB1, NOP7 and YTM1. The complex is held together by ERB1, which interacts with NOP7 via its N-terminal domain and with YTM1 via a high-affinity interaction between the seven-bladed beta-propeller domains of the 2 proteins. The NOP7 complex associates with the 66S pre-ribosome.

Its subcellular location is the nucleus. The protein localises to the nucleolus. It is found in the nucleoplasm. Component of the NOP7 complex, which is required for maturation of the 25S and 5.8S ribosomal RNAs and formation of the 60S ribosome. This Chaetomium thermophilum (strain DSM 1495 / CBS 144.50 / IMI 039719) (Thermochaetoides thermophila) protein is Ribosome biogenesis protein ERB1.